A 311-amino-acid polypeptide reads, in one-letter code: Linearmycin resistance ATP-binding protein LnrL (311 aa).

Positions 2-232 (LQAENIKKAY…LGGDTIIQLT (231 aa)) constitute an ABC transporter domain. 34–41 (GPNGAGKS) is an ATP binding site.

The protein belongs to the ABC transporter superfamily. The complex is composed of two ATP-binding proteins (LnrL) and two transmembrane proteins (LnrM and LnrN).

Functionally, required for resistance to linearmycins, a family of antibiotic-specialized metabolites produced by some streptomycetes. Part of the ABC transporter complex LnrLMN that probably facilitates linearmycin removal from the membrane. Responsible for energy coupling to the transport system. Also mediates KinC-dependent biofilm morphology. This Bacillus subtilis (strain 168) protein is Linearmycin resistance ATP-binding protein LnrL.